The following is a 134-amino-acid chain: Small ribosomal subunit protein uS8c (134 aa).

The protein belongs to the universal ribosomal protein uS8 family. In terms of assembly, part of the 30S ribosomal subunit.

Its subcellular location is the plastid. It localises to the chloroplast. One of the primary rRNA binding proteins, it binds directly to 16S rRNA central domain where it helps coordinate assembly of the platform of the 30S subunit. The protein is Small ribosomal subunit protein uS8c (rps8) of Coffea arabica (Arabian coffee).